A 188-amino-acid chain; its full sequence is dCTP deaminase (188 aa).

Residues 111-116 (KSTYAR), 135-137 (TLE), Gln156, Tyr170, and Gln180 contribute to the dCTP site. The Proton donor/acceptor role is filled by Glu137.

This sequence belongs to the dCTP deaminase family. In terms of assembly, homotrimer.

It carries out the reaction dCTP + H2O + H(+) = dUTP + NH4(+). Its pathway is pyrimidine metabolism; dUMP biosynthesis; dUMP from dCTP (dUTP route): step 1/2. Catalyzes the deamination of dCTP to dUTP. The protein is dCTP deaminase of Francisella philomiragia subsp. philomiragia (strain ATCC 25017 / CCUG 19701 / FSC 153 / O#319-036).